A 142-amino-acid chain; its full sequence is Hemoglobin subunit alpha-A (142 aa).

Positions 2-142 (VLSANDKTNV…VGNVLTAKYR (141 aa)) constitute a Globin domain. His59 is a binding site for O2. Residue His88 participates in heme b binding.

The protein belongs to the globin family. Heterotetramer of two alpha chains and two beta chains. Red blood cells.

Involved in oxygen transport from the lung to the various peripheral tissues. The chain is Hemoglobin subunit alpha-A (HBAA) from Aquila chrysaetos (Golden eagle).